We begin with the raw amino-acid sequence, 473 residues long: Cysteine--tRNA ligase (473 aa).

Cysteine 28 provides a ligand contact to Zn(2+). Positions 30–40 (MTVYDFCHIGH) match the 'HIGH' region motif. Residues cysteine 212, histidine 237, and glutamate 241 each contribute to the Zn(2+) site. Positions 277–281 (KMSKS) match the 'KMSKS' region motif. Residue lysine 280 participates in ATP binding.

This sequence belongs to the class-I aminoacyl-tRNA synthetase family. Monomer. Requires Zn(2+) as cofactor.

The protein localises to the cytoplasm. It catalyses the reaction tRNA(Cys) + L-cysteine + ATP = L-cysteinyl-tRNA(Cys) + AMP + diphosphate. The chain is Cysteine--tRNA ligase from Polynucleobacter asymbioticus (strain DSM 18221 / CIP 109841 / QLW-P1DMWA-1) (Polynucleobacter necessarius subsp. asymbioticus).